Reading from the N-terminus, the 448-residue chain is Delta(14)-sterol reductase ERG24 (448 aa).

7 helical membrane passes run 18–38 (ISGA…FYLL), 75–95 (CWSA…LLPG), 108–128 (VLNY…LLLA), 157–177 (IIIC…ISFI), 251–271 (VTDS…DGVL), 279–299 (MIDI…LAWV), and 318–338 (NLGW…FYIF). NADP(+) is bound by residues K345, R349, L368, W373, and 380-381 (NY). The chain crosses the membrane as a helical span at residues 394-414 (PTGFQTPLTYFYVIYFASLLI). Residues D420, 424–428 (CRAKY), and Y435 contribute to the NADP(+) site.

Belongs to the ERG4/ERG24 family.

It is found in the endoplasmic reticulum membrane. The enzyme catalyses 4,4-dimethyl-5alpha-cholesta-8,24-dien-3beta-ol + NADP(+) = 4,4-dimethyl-5alpha-cholesta-8,14,24-trien-3beta-ol + NADPH + H(+). The protein operates within steroid biosynthesis; zymosterol biosynthesis; zymosterol from lanosterol: step 2/6. Its function is as follows. C-14 sterol reductase; part of the third module of ergosterol biosynthesis pathway that includes the late steps of the pathway. ERG24 reduces the C14=C15 double bond of 4,4-dimethyl-cholesta-8,14,24-trienol to produce 4,4-dimethyl-cholesta-8,24-dienol. The third module or late pathway involves the ergosterol synthesis itself through consecutive reactions that mainly occur in the endoplasmic reticulum (ER) membrane. Firstly, the squalene synthase ERG9 catalyzes the condensation of 2 farnesyl pyrophosphate moieties to form squalene, which is the precursor of all steroids. Squalene synthase is crucial for balancing the incorporation of farnesyl diphosphate (FPP) into sterol and nonsterol isoprene synthesis. Secondly, the squalene epoxidase ERG1 catalyzes the stereospecific oxidation of squalene to (S)-2,3-epoxysqualene, which is considered to be a rate-limiting enzyme in steroid biosynthesis. Then, the lanosterol synthase ERG7 catalyzes the cyclization of (S)-2,3 oxidosqualene to lanosterol, a reaction that forms the sterol core. In the next steps, lanosterol is transformed to zymosterol through a complex process involving various demethylation, reduction and desaturation reactions. The lanosterol 14-alpha-demethylase ERG11 (also known as CYP51) catalyzes C14-demethylation of lanosterol to produce 4,4'-dimethyl cholesta-8,14,24-triene-3-beta-ol, which is critical for ergosterol biosynthesis. The C-14 reductase ERG24 reduces the C14=C15 double bond of 4,4-dimethyl-cholesta-8,14,24-trienol to produce 4,4-dimethyl-cholesta-8,24-dienol. 4,4-dimethyl-cholesta-8,24-dienol is substrate of the C-4 demethylation complex ERG25-ERG26-ERG27 in which ERG25 catalyzes the three-step monooxygenation required for the demethylation of 4,4-dimethyl and 4alpha-methylsterols, ERG26 catalyzes the oxidative decarboxylation that results in a reduction of the 3-beta-hydroxy group at the C-3 carbon to an oxo group, and ERG27 is responsible for the reduction of the keto group on the C-3. ERG28 has a role as a scaffold to help anchor ERG25, ERG26 and ERG27 to the endoplasmic reticulum and ERG29 regulates the activity of the iron-containing C4-methylsterol oxidase ERG25. Then, the sterol 24-C-methyltransferase ERG6 catalyzes the methyl transfer from S-adenosyl-methionine to the C-24 of zymosterol to form fecosterol. The C-8 sterol isomerase ERG2 catalyzes the reaction which results in unsaturation at C-7 in the B ring of sterols and thus converts fecosterol to episterol. The sterol-C5-desaturase ERG3 then catalyzes the introduction of a C-5 double bond in the B ring to produce 5-dehydroepisterol. The C-22 sterol desaturase ERG5 further converts 5-dehydroepisterol into ergosta-5,7,22,24(28)-tetraen-3beta-ol by forming the C-22(23) double bond in the sterol side chain. Finally, ergosta-5,7,22,24(28)-tetraen-3beta-ol is substrate of the C-24(28) sterol reductase ERG4 to produce ergosterol. The chain is Delta(14)-sterol reductase ERG24 from Candida albicans (strain SC5314 / ATCC MYA-2876) (Yeast).